A 236-amino-acid chain; its full sequence is Small ribosomal subunit protein uS2c (236 aa).

This sequence belongs to the universal ribosomal protein uS2 family.

It is found in the plastid. Its subcellular location is the chloroplast. The polypeptide is Small ribosomal subunit protein uS2c (rps2) (Saccharum hybrid (Sugarcane)).